Consider the following 899-residue polypeptide: Receptor-like protein kinase At3g21340 (899 aa).

A signal peptide spans 1–27 (MEYHPQAIRLCALIFISFYALLHLVEA). Residues 28-522 (QDQKGFISLD…GAKKMNVVIP (495 aa)) are Extracellular-facing. Asn-100, Asn-146, Asn-185, Asn-240, Asn-266, Asn-420, Asn-436, Asn-449, Asn-468, and Asn-475 each carry an N-linked (GlcNAc...) asparagine glycan. LRR repeat units lie at residues 415-438 (IVTS…QNLT), 439-461 (HLQE…LADI), and 463-485 (SLLV…LLQK). A helical transmembrane segment spans residues 523-543 (IVASVAFVVVLGSALAFFFIF). Over 544–899 (KKKKTSNSQD…FDIGATPDAR (356 aa)) the chain is Cytoplasmic. Thr-583 bears the Phosphothreonine mark. The 274-residue stretch at 592 to 865 (NNFERVLGKG…QVVIELNECL (274 aa)) folds into the Protein kinase domain. ATP is bound by residues 598–606 (LGKGGFGMV) and Lys-620. Phosphotyrosine is present on Tyr-665. Residue Asp-717 is the Proton acceptor of the active site. Ser-751 is subject to Phosphoserine. Thr-752 and Thr-757 each carry phosphothreonine. At Tyr-765 the chain carries Phosphotyrosine.

The protein belongs to the protein kinase superfamily. Ser/Thr protein kinase family. Autophosphorylated on Tyr and Thr residues.

Its subcellular location is the cell membrane. It catalyses the reaction L-seryl-[protein] + ATP = O-phospho-L-seryl-[protein] + ADP + H(+). It carries out the reaction L-threonyl-[protein] + ATP = O-phospho-L-threonyl-[protein] + ADP + H(+). The catalysed reaction is L-tyrosyl-[protein] + ATP = O-phospho-L-tyrosyl-[protein] + ADP + H(+). Probable receptor with a dual specificity kinase activity acting on both serine/threonine- and tyrosine-containing substrates. This is Receptor-like protein kinase At3g21340 from Arabidopsis thaliana (Mouse-ear cress).